Reading from the N-terminus, the 293-residue chain is DNA repair protein RecO (293 aa).

Belongs to the RecO family.

Functionally, involved in DNA repair and RecF pathway recombination. This chain is DNA repair protein RecO, found in Cyanothece sp. (strain PCC 7425 / ATCC 29141).